A 395-amino-acid polypeptide reads, in one-letter code: Flagellin D (395 aa).

It belongs to the bacterial flagellin family.

The protein localises to the secreted. It is found in the bacterial flagellum. Its function is as follows. Flagellin is the subunit protein which polymerizes to form the filaments of bacterial flagella. The protein is Flagellin D (flaD) of Rhizobium meliloti (Ensifer meliloti).